Reading from the N-terminus, the 954-residue chain is Valine--tRNA ligase (954 aa).

The 'HIGH' region signature appears at 48-58 (PNVTGSLHMGH). Positions 560-564 (KMSKS) match the 'KMSKS' region motif. K563 is an ATP binding site. Positions 883 to 953 (AGFINKEAEL…IQEQYKAIEA (71 aa)) form a coiled coil.

The protein belongs to the class-I aminoacyl-tRNA synthetase family. ValS type 1 subfamily. Monomer.

It is found in the cytoplasm. The enzyme catalyses tRNA(Val) + L-valine + ATP = L-valyl-tRNA(Val) + AMP + diphosphate. Catalyzes the attachment of valine to tRNA(Val). As ValRS can inadvertently accommodate and process structurally similar amino acids such as threonine, to avoid such errors, it has a 'posttransfer' editing activity that hydrolyzes mischarged Thr-tRNA(Val) in a tRNA-dependent manner. In Haemophilus influenzae (strain 86-028NP), this protein is Valine--tRNA ligase.